The sequence spans 240 residues: DNA repair protein RecO (240 aa).

The protein belongs to the RecO family.

Its function is as follows. Involved in DNA repair and RecF pathway recombination. The sequence is that of DNA repair protein RecO from Actinobacillus pleuropneumoniae serotype 7 (strain AP76).